Here is a 285-residue protein sequence, read N- to C-terminus: uncharacterized protein (285 aa).

2 disordered regions span residues 115–139 and 152–183; these read AAGK…QERN and EHDV…NRGV. Basic and acidic residues-rich tracts occupy residues 128-138 and 152-170; these read KEADVQTKQER and EHDV…DLKT.

This is an uncharacterized protein from Escherichia coli (strain K12).